The sequence spans 463 residues: Asparagine--tRNA ligase (463 aa).

The protein belongs to the class-II aminoacyl-tRNA synthetase family. In terms of assembly, homodimer.

It is found in the cytoplasm. It catalyses the reaction tRNA(Asn) + L-asparagine + ATP = L-asparaginyl-tRNA(Asn) + AMP + diphosphate + H(+). This Acholeplasma laidlawii (strain PG-8A) protein is Asparagine--tRNA ligase.